Reading from the N-terminus, the 200-residue chain is Probable UbiX-like flavin prenyltransferase (200 aa).

FMN contacts are provided by residues 9–11 (GAT), S36, 87–90 (SMKT), and R122.

It belongs to the UbiX/PAD1 family. YclB subfamily. As to quaternary structure, homododecamer.

The enzyme catalyses dimethylallyl phosphate + FMNH2 = prenylated FMNH2 + phosphate. Involved in the non-oxidative decarboxylation and detoxification of phenolic derivatives under both aerobic and anaerobic conditions. Flavin prenyltransferase that catalyzes the synthesis of the prenylated FMN cofactor (prenyl-FMN) for phenolic acid decarboxylase. This Streptomyces sp. (strain D7) protein is Probable UbiX-like flavin prenyltransferase.